The chain runs to 54 residues: Photosystem II reaction center protein K (54 aa).

Positions 1–17 (MSFENFAIITLKENVFA) are excised as a propeptide. Residues 33–53 (LPIIPVLFLLLAFVWQSAVKF) form a helical membrane-spanning segment.

It belongs to the PsbK family. In terms of assembly, PSII is composed of 1 copy each of membrane proteins PsbA, PsbB, PsbC, PsbD, PsbE, PsbF, PsbH, PsbI, PsbJ, PsbK, PsbL, PsbM, PsbT, PsbY, PsbZ, Psb30/Ycf12, at least 3 peripheral proteins of the oxygen-evolving complex and a large number of cofactors. It forms dimeric complexes.

It localises to the plastid. The protein resides in the chloroplast thylakoid membrane. One of the components of the core complex of photosystem II (PSII). PSII is a light-driven water:plastoquinone oxidoreductase that uses light energy to abstract electrons from H(2)O, generating O(2) and a proton gradient subsequently used for ATP formation. It consists of a core antenna complex that captures photons, and an electron transfer chain that converts photonic excitation into a charge separation. The chain is Photosystem II reaction center protein K from Euglena deses.